The primary structure comprises 61 residues: Large ribosomal subunit protein uL30 (61 aa).

This sequence belongs to the universal ribosomal protein uL30 family. In terms of assembly, part of the 50S ribosomal subunit.

In Corynebacterium efficiens (strain DSM 44549 / YS-314 / AJ 12310 / JCM 11189 / NBRC 100395), this protein is Large ribosomal subunit protein uL30.